Reading from the N-terminus, the 147-residue chain is UPF0178 protein IL2341 (147 aa).

The protein belongs to the UPF0178 family.

This chain is UPF0178 protein IL2341, found in Idiomarina loihiensis (strain ATCC BAA-735 / DSM 15497 / L2-TR).